The primary structure comprises 254 residues: MESYLVDTYQGVPYTAAVQTDLVEKDQLPARLTVWFPLFQTNTPPTVLLEQLKTLTITTLYTASQNGPILKVNASAQGAAMSALPKSFDVSASVALDDYSKLEFDKLTVCELKAVYLTTMKPYGMVSKFVNSAKAVGKKTHDLIALCDFLDLEKGVPVTIPAYIKSVSIKESESATVEAAIGGEADQAITQARIAPYAGLIMIMTMNNPKGIFKKLGAGVQVIVELGAYVQAESISRICRNWSHQGTRYVLKSR.

This sequence belongs to the paramyxoviruses M protein family. Interacts with glycoprotein G (via N-terminus), and protein N. Interacts with protein M2-1; this interaction mediates the association between proteins M and N.

Its subcellular location is the virion. The protein localises to the host cytoplasm. The protein resides in the host nucleus. It localises to the host cell membrane. Functionally, has a crucial role in virus assembly and budding. The matrix interacts with the RNP complex and this association serves two functions: facilitate virion assembly and inhibit the viral transcriptase activity. Early in infection, M is localized to the nucleus and may inhibit host cell transcription. Later on, M can associate with lipid rafts supposely by interacting with the cytoskeleton and with the cytoplasmic tail of glycoprotein G. The binding of M to host membrane is stabilized by the surface expression of the viral glycoproteins. These interactions may allow virus formation by mediating association of the nucleocapsid with the nascent envelope. In Avian metapneumovirus (isolate Canada goose/Minnesota/15a/2001) (AMPV), this protein is Matrix protein (M).